A 500-amino-acid chain; its full sequence is Glycerol kinase (500 aa).

Threonine 12 is a binding site for ADP. Residues threonine 12, threonine 13, and serine 14 each contribute to the ATP site. Threonine 12 serves as a coordination point for sn-glycerol 3-phosphate. Residue arginine 16 coordinates ADP. Positions 82, 83, 134, and 243 each coordinate sn-glycerol 3-phosphate. The glycerol site is built by arginine 82, glutamate 83, tyrosine 134, aspartate 243, and glutamine 244. Residues threonine 265 and glycine 308 each coordinate ADP. Residues threonine 265, glycine 308, glutamine 312, and glycine 411 each coordinate ATP. An ADP-binding site is contributed by glycine 411.

This sequence belongs to the FGGY kinase family.

The enzyme catalyses glycerol + ATP = sn-glycerol 3-phosphate + ADP + H(+). Its pathway is polyol metabolism; glycerol degradation via glycerol kinase pathway; sn-glycerol 3-phosphate from glycerol: step 1/1. Its activity is regulated as follows. Inhibited by fructose 1,6-bisphosphate (FBP). Functionally, key enzyme in the regulation of glycerol uptake and metabolism. Catalyzes the phosphorylation of glycerol to yield sn-glycerol 3-phosphate. This chain is Glycerol kinase, found in Chelativorans sp. (strain BNC1).